Reading from the N-terminus, the 116-residue chain is Protein Rev (116 aa).

2 positions are modified to phosphoserine; by host CK2: Ser-5 and Ser-8. Residues 18–26 are homomultimerization; it reads LIKLLYQSN. Positions 21-49 are disordered; it reads LLYQSNPPPNPEGTRQARRNRRRRWRERQ. The short motif at 34–50 is the Nuclear localization signal and RNA-binding (RRE) element; it reads TRQARRNRRRRWRERQR. Basic residues predominate over residues 36-47; sequence QARRNRRRRWRE. The Nuclear export signal and binding to XPO1 signature appears at 73–84; that stretch reads LQLPPLERLTLD. 2 positions are modified to phosphoserine; by host: Ser-92 and Ser-99. Positions 92–116 are disordered; the sequence is SGTQGVGSPQILVESPTVLESGTKE.

Belongs to the HIV-1 REV protein family. Homomultimer; when bound to the RRE. Multimeric assembly is essential for activity and may involve XPO1. Binds to human KPNB1, XPO1, TNPO1, RANBP5 and IPO7. Interacts with the viral Integrase. Interacts with human KHDRBS1. Interacts with human NAP1; this interaction decreases Rev multimerization and stimulates its activity. Interacts with human DEAD-box helicases DDX3 and DDX24; these interactions may serve for viral RNA export to the cytoplasm and packaging, respectively. Interacts with human PSIP1; this interaction may inhibit HIV-1 DNA integration by promoting dissociation of the Integrase-LEDGF/p75 complex. In terms of processing, asymmetrically arginine dimethylated at one site by host PRMT6. Methylation impairs the RNA-binding activity and export of viral RNA from the nucleus to the cytoplasm. Post-translationally, phosphorylated by protein kinase CK2. Presence of, and maybe binding to the N-terminus of the regulatory beta subunit of CK2 is necessary for CK2-mediated Rev's phosphorylation.

It localises to the host nucleus. It is found in the host nucleolus. The protein localises to the host cytoplasm. Escorts unspliced or incompletely spliced viral pre-mRNAs (late transcripts) out of the nucleus of infected cells. These pre-mRNAs carry a recognition sequence called Rev responsive element (RRE) located in the env gene, that is not present in fully spliced viral mRNAs (early transcripts). This function is essential since most viral proteins are translated from unspliced or partially spliced pre-mRNAs which cannot exit the nucleus by the pathway used by fully processed cellular mRNAs. Rev itself is translated from a fully spliced mRNA that readily exits the nucleus. Rev's nuclear localization signal (NLS) binds directly to KPNB1/Importin beta-1 without previous binding to KPNA1/Importin alpha-1. KPNB1 binds to the GDP bound form of RAN (Ran-GDP) and targets Rev to the nucleus. In the nucleus, the conversion from Ran-GDP to Ran-GTP dissociates Rev from KPNB1 and allows Rev's binding to the RRE in viral pre-mRNAs. Rev multimerization on the RRE via cooperative assembly exposes its nuclear export signal (NES) to the surface. Rev can then form a complex with XPO1/CRM1 and Ran-GTP, leading to nuclear export of the complex. Conversion from Ran-GTP to Ran-GDP mediates dissociation of the Rev/RRE/XPO1/RAN complex, so that Rev can return to the nucleus for a subsequent round of export. Beside KPNB1, also seems to interact with TNPO1/Transportin-1, RANBP5/IPO5 and IPO7/RANBP7 for nuclear import. The nucleoporin-like HRB/RIP is an essential cofactor that probably indirectly interacts with Rev to release HIV RNAs from the perinuclear region to the cytoplasm. The polypeptide is Protein Rev (Homo sapiens (Human)).